The chain runs to 263 residues: Acidic leucine-rich nuclear phosphoprotein 32 family member E (263 aa).

LRR repeat units follow at residues 43–64 (ELEFLSMANVELKSLSKLPKLP), 65–84 (KLRKLELSDNSISGGLDVLT), and 89–110 (NITYLNLSGNKIKDLSTVEALA). Residues 123–161 (CEITNLEDYRENIFQRLSQITYLDGFDQEDNEAPDSEED) enclose the LRRCT domain. Residues 146-263 (DGFDQEDNEA…PEDEGDEDED (118 aa)) are disordered. Acidic residues-rich tracts occupy residues 148-172 (FDQEDNEAPDSEEDDDDDDYDDDEE), 180-203 (AEEDEEDEESASDLGEEEEEEEEV), and 214-242 (RDEEDDDDYVEDGAEGEEEEEEDEEDEAA). Residues 202 to 263 (EVGLSYLMKE…PEDEGDEDED (62 aa)) form a ZID domain region.

It belongs to the ANP32 family. In terms of assembly, component of a SWR1-like complex. Interacts with H2A.Z/H2AZ1. In terms of processing, phosphorylated. The phosphorylation is nuclear localization signal (NLS)-dependent.

Its subcellular location is the cytoplasm. It localises to the nucleus. In terms of biological role, histone chaperone that specifically mediates the genome-wide removal of histone H2A.Z/H2AZ1 from the nucleosome: removes H2A.Z/H2AZ1 from its normal sites of deposition, especially from enhancer and insulator regions. Not involved in deposition of H2A.Z/H2AZ1 in the nucleosome. May stabilize the evicted H2A.Z/H2AZ1-H2B dimer, thus shifting the equilibrium towards dissociation and the off-chromatin state. Inhibits activity of protein phosphatase 2A (PP2A). Does not inhibit protein phosphatase 1. May play a role in cerebellar development and synaptogenesis. This Xenopus laevis (African clawed frog) protein is Acidic leucine-rich nuclear phosphoprotein 32 family member E (anp32e).